The following is a 130-amino-acid chain: Glycine cleavage system H protein (130 aa).

In terms of domain architecture, Lipoyl-binding spans 25 to 106 (VALIGITDFA…PFDTWMVKLK (82 aa)). Lysine 66 carries the post-translational modification N6-lipoyllysine.

This sequence belongs to the GcvH family. In terms of assembly, the glycine cleavage system is composed of four proteins: P, T, L and H. It depends on (R)-lipoate as a cofactor.

The glycine cleavage system catalyzes the degradation of glycine. The H protein shuttles the methylamine group of glycine from the P protein to the T protein. The polypeptide is Glycine cleavage system H protein (Leptospira biflexa serovar Patoc (strain Patoc 1 / Ames)).